We begin with the raw amino-acid sequence, 95 residues long: Integration host factor subunit beta (95 aa).

Residues 59–95 (RVGRNPKTGQSVRLDGKFVPHFKPGKELRDRVNEDES) form a disordered region. Positions 72–95 (LDGKFVPHFKPGKELRDRVNEDES) are enriched in basic and acidic residues.

It belongs to the bacterial histone-like protein family. As to quaternary structure, heterodimer of an alpha and a beta chain.

Its function is as follows. This protein is one of the two subunits of integration host factor, a specific DNA-binding protein that functions in genetic recombination as well as in transcriptional and translational control. The chain is Integration host factor subunit beta from Ectopseudomonas mendocina (strain ymp) (Pseudomonas mendocina).